Reading from the N-terminus, the 284-residue chain is MGEIIKGKPVADKISEDLIQEIEGLKGKGIQPKLAIVRVGANSSDLAYEKGALGRSKKVGVETEVHELPEDITQDDFIKELKKLNEDKAVNGILIFRPLPEQLDESVIKYVIAPEKDIDCLSPINVGKMTEGDKTGFPPCTPTAVVEILKFYGVELQGKDCAIIGASMVVGKPAALLLLNENATISVCHIFTKDSAKIASQADVVVVGVGVPRLVKENWIANGAVVIDVGINVDKEGNMCGDVDFDGVKDKVSMITPVPGGVGSVTTSILAKHVVKACKQQNNL.

NADP(+) is bound by residues Gly165–Ser167, Ile190, and Ile231.

This sequence belongs to the tetrahydrofolate dehydrogenase/cyclohydrolase family. Homodimer.

The enzyme catalyses (6R)-5,10-methylene-5,6,7,8-tetrahydrofolate + NADP(+) = (6R)-5,10-methenyltetrahydrofolate + NADPH. It carries out the reaction (6R)-5,10-methenyltetrahydrofolate + H2O = (6R)-10-formyltetrahydrofolate + H(+). The protein operates within one-carbon metabolism; tetrahydrofolate interconversion. Its function is as follows. Catalyzes the oxidation of 5,10-methylenetetrahydrofolate to 5,10-methenyltetrahydrofolate and then the hydrolysis of 5,10-methenyltetrahydrofolate to 10-formyltetrahydrofolate. This is Bifunctional protein FolD from Alkaliphilus metalliredigens (strain QYMF).